Reading from the N-terminus, the 335-residue chain is MTRTANEFLTPQAIKVEAVSGTSAKVILEPLERGFGHTLGNALRRILLSSLPGAAVVEVEIEGVEHEYSTLEGLQQDIVELLLNLKGLSIKLFDQNEAYLTLEKQGPGDITAADLRLPHNVEVVNPEHLIGTLSATGSLKMRLKVSQGRGYETSDSRFPEGETRPVGRLQLDASYSPIKRVSYTVENARVEQRTDLDKLVIDLETNGTVDPEEAIRKAATILQQQIAIFVDLQKDQTPVAQEPREEVDPILLRPVDDLELTVRSANCLKAENIYYIGDLVQRTEVELLKTPNLGKKSLTEIKDVLASKGLQLGMRLENWPPASLRMDDRFAYRSR.

The alpha N-terminal domain (alpha-NTD) stretch occupies residues 1–233; the sequence is MTRTANEFLT…QQIAIFVDLQ (233 aa). The interval 247–335 is alpha C-terminal domain (alpha-CTD); sequence VDPILLRPVD…MDDRFAYRSR (89 aa).

This sequence belongs to the RNA polymerase alpha chain family. As to quaternary structure, homodimer. The RNAP catalytic core consists of 2 alpha, 1 beta, 1 beta' and 1 omega subunit. When a sigma factor is associated with the core the holoenzyme is formed, which can initiate transcription.

It catalyses the reaction RNA(n) + a ribonucleoside 5'-triphosphate = RNA(n+1) + diphosphate. DNA-dependent RNA polymerase catalyzes the transcription of DNA into RNA using the four ribonucleoside triphosphates as substrates. In Acinetobacter baumannii (strain AB307-0294), this protein is DNA-directed RNA polymerase subunit alpha.